A 538-amino-acid chain; its full sequence is Casein kinase I homolog 1 (538 aa).

Positions 39-61 are disordered; sequence SPARSSMTATTAANSNSNSSRDD. The span at 41–57 shows a compositional bias: low complexity; that stretch reads ARSSMTATTAANSNSNS. A Protein kinase domain is found at 69-353; it reads YKIGKKIGEG…ETADGQYDWM (285 aa). ATP is bound by residues 75–83 and lysine 98; that span reads IGEGSFGVL. The active-site Proton acceptor is the aspartate 188. Disordered regions lie at residues 366-428 and 474-527; these read NKKP…KPKL and QQQL…LAAS. Low complexity-rich tracts occupy residues 391-410 and 474-498; these read QLQM…QQQQ and QQQL…QFGA. Residues serine 522, serine 523, and serine 527 each carry the phosphoserine modification. 2 S-palmitoyl cysteine lipidation sites follow: cysteine 537 and cysteine 538.

The protein belongs to the protein kinase superfamily. CK1 Ser/Thr protein kinase family. Casein kinase I subfamily. Post-translationally, palmitoylated by AKR1.

The protein resides in the cell membrane. Its subcellular location is the mitochondrion membrane. It catalyses the reaction L-seryl-[protein] + ATP = O-phospho-L-seryl-[protein] + ADP + H(+). The enzyme catalyses L-threonyl-[protein] + ATP = O-phospho-L-threonyl-[protein] + ADP + H(+). Functionally, casein kinases are operationally defined by their preferential utilization of acidic proteins such as caseins as substrates. The sequence is that of Casein kinase I homolog 1 (YCK1) from Saccharomyces cerevisiae (strain ATCC 204508 / S288c) (Baker's yeast).